The primary structure comprises 153 residues: Endoribonuclease YbeY (153 aa).

Residues H118, H122, and H128 each coordinate Zn(2+).

It belongs to the endoribonuclease YbeY family. Zn(2+) is required as a cofactor.

It is found in the cytoplasm. Its function is as follows. Single strand-specific metallo-endoribonuclease involved in late-stage 70S ribosome quality control and in maturation of the 3' terminus of the 16S rRNA. This is Endoribonuclease YbeY from Staphylococcus saprophyticus subsp. saprophyticus (strain ATCC 15305 / DSM 20229 / NCIMB 8711 / NCTC 7292 / S-41).